The chain runs to 349 residues: Magnesium-protoporphyrin IX monomethyl ester [oxidative] cyclase (349 aa).

Positions 1-22 are disordered; it reads MTATASASSVSGSLGRNELPPH.

It belongs to the AcsF family. It depends on Fe cation as a cofactor.

It catalyses the reaction Mg-protoporphyrin IX 13-monomethyl ester + 3 NADPH + 3 O2 + 2 H(+) = 3,8-divinyl protochlorophyllide a + 3 NADP(+) + 5 H2O. The protein operates within porphyrin-containing compound metabolism; chlorophyll biosynthesis (light-independent). In terms of biological role, catalyzes the formation of the isocyclic ring in chlorophyll biosynthesis. Mediates the cyclase reaction, which results in the formation of divinylprotochlorophyllide (Pchlide) characteristic of all chlorophylls from magnesium-protoporphyrin IX 13-monomethyl ester (MgPMME). This is Magnesium-protoporphyrin IX monomethyl ester [oxidative] cyclase from Prochlorococcus marinus (strain MIT 9211).